The chain runs to 271 residues: Formamidopyrimidine-DNA glycosylase (271 aa).

Pro-2 acts as the Schiff-base intermediate with DNA in catalysis. Catalysis depends on Glu-3, which acts as the Proton donor. Lys-56 serves as the catalytic Proton donor; for beta-elimination activity. DNA contacts are provided by His-89, Arg-107, and Arg-151. Residues 236-270 form an FPG-type zinc finger; that stretch reads MVYDRAGLPCRVCAAPIKSIRQGQRSSFYCATCQK. The active-site Proton donor; for delta-elimination activity is Arg-260.

Belongs to the FPG family. As to quaternary structure, monomer. Zn(2+) is required as a cofactor.

The catalysed reaction is Hydrolysis of DNA containing ring-opened 7-methylguanine residues, releasing 2,6-diamino-4-hydroxy-5-(N-methyl)formamidopyrimidine.. It carries out the reaction 2'-deoxyribonucleotide-(2'-deoxyribose 5'-phosphate)-2'-deoxyribonucleotide-DNA = a 3'-end 2'-deoxyribonucleotide-(2,3-dehydro-2,3-deoxyribose 5'-phosphate)-DNA + a 5'-end 5'-phospho-2'-deoxyribonucleoside-DNA + H(+). Involved in base excision repair of DNA damaged by oxidation or by mutagenic agents. Acts as a DNA glycosylase that recognizes and removes damaged bases. Has a preference for oxidized purines, such as 7,8-dihydro-8-oxoguanine (8-oxoG). Has AP (apurinic/apyrimidinic) lyase activity and introduces nicks in the DNA strand. Cleaves the DNA backbone by beta-delta elimination to generate a single-strand break at the site of the removed base with both 3'- and 5'-phosphates. The protein is Formamidopyrimidine-DNA glycosylase of Polaromonas naphthalenivorans (strain CJ2).